Here is a 526-residue protein sequence, read N- to C-terminus: Peptide chain release factor 3 (526 aa).

Residues 9–277 enclose the tr-type G domain; it reads DKRRTFAIIS…GIVEWAPVPQ (269 aa). Residues 18 to 25, 86 to 90, and 140 to 143 contribute to the GTP site; these read SHPDAGKT, DTPGH, and NKLD.

The protein belongs to the TRAFAC class translation factor GTPase superfamily. Classic translation factor GTPase family. PrfC subfamily.

The protein resides in the cytoplasm. In terms of biological role, increases the formation of ribosomal termination complexes and stimulates activities of RF-1 and RF-2. It binds guanine nucleotides and has strong preference for UGA stop codons. It may interact directly with the ribosome. The stimulation of RF-1 and RF-2 is significantly reduced by GTP and GDP, but not by GMP. This Shewanella pealeana (strain ATCC 700345 / ANG-SQ1) protein is Peptide chain release factor 3.